Consider the following 139-residue polypeptide: Aspartate 1-decarboxylase (139 aa).

S25 serves as the catalytic Schiff-base intermediate with substrate; via pyruvic acid. At S25 the chain carries Pyruvic acid (Ser). Position 57 (T57) interacts with substrate. Catalysis depends on Y58, which acts as the Proton donor. Residue 73–75 (GAA) participates in substrate binding.

Belongs to the PanD family. As to quaternary structure, heterooctamer of four alpha and four beta subunits. Pyruvate serves as cofactor. Is synthesized initially as an inactive proenzyme, which is activated by self-cleavage at a specific serine bond to produce a beta-subunit with a hydroxyl group at its C-terminus and an alpha-subunit with a pyruvoyl group at its N-terminus.

Its subcellular location is the cytoplasm. It carries out the reaction L-aspartate + H(+) = beta-alanine + CO2. It functions in the pathway cofactor biosynthesis; (R)-pantothenate biosynthesis; beta-alanine from L-aspartate: step 1/1. Functionally, catalyzes the pyruvoyl-dependent decarboxylation of aspartate to produce beta-alanine. This Mycobacterium bovis (strain BCG / Tokyo 172 / ATCC 35737 / TMC 1019) protein is Aspartate 1-decarboxylase.